A 257-amino-acid polypeptide reads, in one-letter code: tRNA-cytidine(32) 2-sulfurtransferase (257 aa).

The PP-loop motif motif lies at 37 to 42 (SGGKDS). [4Fe-4S] cluster-binding residues include Cys-112, Cys-115, and Cys-202.

The protein belongs to the TtcA family. Homodimer. Requires Mg(2+) as cofactor. The cofactor is [4Fe-4S] cluster.

It is found in the cytoplasm. The catalysed reaction is cytidine(32) in tRNA + S-sulfanyl-L-cysteinyl-[cysteine desulfurase] + AH2 + ATP = 2-thiocytidine(32) in tRNA + L-cysteinyl-[cysteine desulfurase] + A + AMP + diphosphate + H(+). The protein operates within tRNA modification. In terms of biological role, catalyzes the ATP-dependent 2-thiolation of cytidine in position 32 of tRNA, to form 2-thiocytidine (s(2)C32). The sulfur atoms are provided by the cysteine/cysteine desulfurase (IscS) system. The polypeptide is tRNA-cytidine(32) 2-sulfurtransferase (Geobacter sulfurreducens (strain ATCC 51573 / DSM 12127 / PCA)).